The sequence spans 398 residues: Nicotinate phosphoribosyltransferase (398 aa).

Histidine 221 bears the Phosphohistidine; by autocatalysis mark.

The protein belongs to the NAPRTase family. Post-translationally, transiently phosphorylated on a His residue during the reaction cycle. Phosphorylation strongly increases the affinity for substrates and increases the rate of nicotinate D-ribonucleotide production. Dephosphorylation regenerates the low-affinity form of the enzyme, leading to product release.

The enzyme catalyses nicotinate + 5-phospho-alpha-D-ribose 1-diphosphate + ATP + H2O = nicotinate beta-D-ribonucleotide + ADP + phosphate + diphosphate. Its pathway is cofactor biosynthesis; NAD(+) biosynthesis; nicotinate D-ribonucleotide from nicotinate: step 1/1. Functionally, catalyzes the synthesis of beta-nicotinate D-ribonucleotide from nicotinate and 5-phospho-D-ribose 1-phosphate at the expense of ATP. This Buchnera aphidicola subsp. Schizaphis graminum (strain Sg) protein is Nicotinate phosphoribosyltransferase.